The following is a 168-amino-acid chain: Transcription antitermination protein NusB (168 aa).

The protein belongs to the NusB family.

In terms of biological role, involved in transcription antitermination. Required for transcription of ribosomal RNA (rRNA) genes. Binds specifically to the boxA antiterminator sequence of the ribosomal RNA (rrn) operons. The sequence is that of Transcription antitermination protein NusB from Brucella anthropi (strain ATCC 49188 / DSM 6882 / CCUG 24695 / JCM 21032 / LMG 3331 / NBRC 15819 / NCTC 12168 / Alc 37) (Ochrobactrum anthropi).